The chain runs to 62 residues: Zinc metalloproteinase-disintegrin-like BaG (62 aa).

The 31-residue stretch at 24–54 folds into the Peptidase M12B domain; sequence KTDLLNRSHDNAQLSPINLVVAVIMAHEMGH. N-linked (GlcNAc...) asparagine glycosylation occurs at Asn-29. His-50 is a binding site for Zn(2+). Residue Glu-51 is part of the active site. His-54 contacts Zn(2+).

The protein belongs to the venom metalloproteinase (M12B) family. P-III subfamily. P-IIIc sub-subfamily. As to quaternary structure, dimer. The cofactor is Zn(2+). The N-terminus is blocked. Expressed by the venom gland.

The protein localises to the secreted. Inhibited by EDTA, and 1,10-phenanthroline. Snake venom Zinc metalloproteinase that inhibits ADP-induced platelet aggregation and inhibits the alpha-5/beta-1 (ITGA5/ITGB1) integrin, a fibronectin receptor. Has caseinolytic activity. Induces the detachment of cells that are bound to fibronectin. The sequence is that of Zinc metalloproteinase-disintegrin-like BaG from Bothrops alternatus (Urutu).